Consider the following 2123-residue polypeptide: Bromodomain adjacent to zinc finger domain protein 2B (2123 aa).

7 disordered regions span residues 1–129, 144–306, 357–402, 473–534, 546–691, 756–793, and 937–960; these read MESG…VNGT, TPAS…LSQQ, PSPD…EMGK, NENV…HPHP, RGTD…RRVA, RAMDGRRGRPPNPDRPRAREESRMKRRKGRPPNVGSAE, and ARKKAEEKERLKQEKRDEKRLNKE. Over residues 7–46 the composition is skewed to low complexity; the sequence is LPSSPASSTTPTSSSAPSVASAVSKSSLSTGAASLSSTAS. Residues 83–95 show a composition bias toward pro residues; the sequence is FFPPLLGIPPLFA. Residues 100–116 show a composition bias toward polar residues; that stretch reads NHDSSFHSRTSGKSSRN. 2 stretches are compositionally biased toward low complexity: residues 147-157 and 193-216; these read SSSMGQNQSTS and ESSSNSDSDSGTSSDTSSEGISSS. Over residues 217–243 the composition is skewed to acidic residues; it reads DSDDLEEEEEEDQSVEESEDDDSDSET. Residues 259 to 277 show a composition bias toward basic and acidic residues; that stretch reads SDPKTDGQKATEKAQERRT. 2 stretches are compositionally biased toward low complexity: residues 291-306 and 366-379; these read PPFQSQQKQPQVLSQQ and NKNTSEESSSLTSE. Positions 473-502 are enriched in polar residues; that stretch reads NENVSSSTPFSSPVNLSTSGRRAPGSQTPA. The segment covering 546-559 has biased composition (basic and acidic residues); it reads RGTDSDVPSSKDSE. The segment covering 560-587 has biased composition (acidic residues); it reads DSNEDEEEDDEEEDEEDDEDDESDDSQS. The span at 588-597 shows a compositional bias: low complexity; that stretch reads ESDSNSQSDS. Acidic residues predominate over residues 598–615; the sequence is EGSEDDEEKDQEESDSDT. Low complexity-rich tracts occupy residues 628 to 637 and 671 to 683; these read SSSAKSPPSS and TSSSTLTSTPHSG. An MBD domain is found at 690-765; the sequence is VADDQELRIP…RAMDGRRGRP (76 aa). Positions 756-778 are enriched in basic and acidic residues; it reads RAMDGRRGRPPNPDRPRAREESR. The 66-residue stretch at 1004 to 1069 folds into the DDT domain; it reads GTTFSDCLMV…LSAAVCDPGL (66 aa). Disordered regions lie at residues 1183–1260, 1396–1444, 1499–1526, and 1588–1614; these read RDAS…QTAS, PPES…KTDA, TLVTPQSQPPSKSPSPAPAALLGPSSVQ, and FLTSSVASSKSDSPVPPAERPSSAQPV. The segment covering 1214-1238 has biased composition (acidic residues); that stretch reads SDYDDDDDDDSDDQADEDEEDEEDK. Basic and acidic residues predominate over residues 1239-1248; it reads DDKKGKKTDI. Positions 1254–1281 form a coiled coil; that stretch reads EGDQTASVEELEKQIEKLSKQQSQYRRK. 2 stretches are compositionally biased toward polar residues: residues 1408–1422 and 1430–1444; these read NVSTNGGPLSHQNSG and PSATTAQSPVGKTDA. Pro residues predominate over residues 1505-1515; that stretch reads SQPPSKSPSPA. The segment covering 1588–1600 has biased composition (low complexity); the sequence is FLTSSVASSKSDS. The PHD-type zinc finger occupies 1886-1936; that stretch reads KVYCQICRKGDNEELLLLCDGCDKGCHTYCHRPKITTIPDGDWFCPACISK. Positions 1949-2013 are disordered; that stretch reads VKGKKTNDSK…AESTTSIKKP (65 aa). The span at 1984–1995 shows a compositional bias: basic and acidic residues; sequence GSKELKKRKMEE. The segment covering 1996-2010 has biased composition (polar residues); the sequence is TTSLNLSKAESTTSI. Residues 2015-2119 enclose the Bromo domain; it reads KDESRDLALC…KYFEKKWTDT (105 aa).

The protein belongs to the WAL family. As to quaternary structure, component of the BRF-1 ISWI chromatin remodeling complex, at least composed of SMARCA1 and BAZ2B, which regulates the spacing of histone octamers on the DNA template to facilitate access to DNA. Within the BRF-1 ISWI chromatin remodeling complex interacts with SMARCA1; the interaction is direct. Component of the BRF-5 ISWI chromatin remodeling complex, at least composed of SMARCA5/SNF2H and BAZ2B, which regulates the spacing of histone octamers on the DNA template to facilitate access to DNA. Within the BRF-5 ISWI chromatin remodeling complex interacts with SMARCA5/SNF2H; the interaction is direct. Interacts with acetylated lysine residues on histone H1.4, H2A, H2B, H3 and H4 (in vitro). Interacts with EHMT1.

Its subcellular location is the nucleus. Its function is as follows. Regulatory subunit of the ATP-dependent BRF-1 and BRF-5 ISWI chromatin remodeling complexes, which form ordered nucleosome arrays on chromatin and facilitate access to DNA during DNA-templated processes such as DNA replication, transcription, and repair. Both complexes regulate the spacing of nucleosomes along the chromatin and have the ability to slide mononucleosomes to the center of a DNA template. The BRF-1 ISWI chromatin remodeling complex has a lower ATP hydrolysis rate than the BRF-5 ISWI chromatin remodeling complex. Chromatin reader protein, involved in positively modulating the rate of age-related behavioral deterioration. Represses the expression of mitochondrial function-related genes, perhaps by occupying their promoter regions, working in concert with histone methyltransferase EHMT1. The sequence is that of Bromodomain adjacent to zinc finger domain protein 2B from Mus musculus (Mouse).